Here is a 612-residue protein sequence, read N- to C-terminus: UvrABC system protein C (612 aa).

The GIY-YIG domain occupies 20-98 (THSGVYRMLD…IKQHRPKYNI (79 aa)). The 36-residue stretch at 208 to 243 (SSVLEEISAKMYQASEDMEYEKAQVYRDQLVILRKL) folds into the UVR domain.

It belongs to the UvrC family. In terms of assembly, interacts with UvrB in an incision complex.

The protein localises to the cytoplasm. Its function is as follows. The UvrABC repair system catalyzes the recognition and processing of DNA lesions. UvrC both incises the 5' and 3' sides of the lesion. The N-terminal half is responsible for the 3' incision and the C-terminal half is responsible for the 5' incision. This Francisella philomiragia subsp. philomiragia (strain ATCC 25017 / CCUG 19701 / FSC 153 / O#319-036) protein is UvrABC system protein C.